A 121-amino-acid chain; its full sequence is Putative ankyrin repeat protein L215 (121 aa).

ANK repeat units lie at residues 10–40 (QYDS…SFKE) and 42–71 (IHET…NKLV).

In Acanthamoeba polyphaga mimivirus (APMV), this protein is Putative ankyrin repeat protein L215.